Here is a 765-residue protein sequence, read N- to C-terminus: Phosphoribosylformylglycinamidine synthase subunit PurL (765 aa).

Over residues 1–13 (MTVSPTSAPTQAI) the composition is skewed to polar residues. A disordered region spans residues 1 to 32 (MTVSPTSAPTQAIDTVERAATTPDEPQPFGEL). The active site involves H65. 2 residues coordinate ATP: Y68 and K112. E114 provides a ligand contact to Mg(2+). Substrate-binding positions include 115 to 118 (SHNH) and R137. H116 functions as the Proton acceptor in the catalytic mechanism. D138 contributes to the Mg(2+) binding site. A substrate-binding site is contributed by Q263. Position 291 (D291) interacts with Mg(2+). Substrate is bound at residue 335–337 (ESQ). Residues N523 and G560 each coordinate ATP. N561 serves as a coordination point for Mg(2+). S563 lines the substrate pocket.

It belongs to the FGAMS family. As to quaternary structure, monomer. Part of the FGAM synthase complex composed of 1 PurL, 1 PurQ and 2 PurS subunits.

Its subcellular location is the cytoplasm. The catalysed reaction is N(2)-formyl-N(1)-(5-phospho-beta-D-ribosyl)glycinamide + L-glutamine + ATP + H2O = 2-formamido-N(1)-(5-O-phospho-beta-D-ribosyl)acetamidine + L-glutamate + ADP + phosphate + H(+). The protein operates within purine metabolism; IMP biosynthesis via de novo pathway; 5-amino-1-(5-phospho-D-ribosyl)imidazole from N(2)-formyl-N(1)-(5-phospho-D-ribosyl)glycinamide: step 1/2. In terms of biological role, part of the phosphoribosylformylglycinamidine synthase complex involved in the purines biosynthetic pathway. Catalyzes the ATP-dependent conversion of formylglycinamide ribonucleotide (FGAR) and glutamine to yield formylglycinamidine ribonucleotide (FGAM) and glutamate. The FGAM synthase complex is composed of three subunits. PurQ produces an ammonia molecule by converting glutamine to glutamate. PurL transfers the ammonia molecule to FGAR to form FGAM in an ATP-dependent manner. PurS interacts with PurQ and PurL and is thought to assist in the transfer of the ammonia molecule from PurQ to PurL. The sequence is that of Phosphoribosylformylglycinamidine synthase subunit PurL from Mycolicibacterium paratuberculosis (strain ATCC BAA-968 / K-10) (Mycobacterium paratuberculosis).